We begin with the raw amino-acid sequence, 77 residues long: Conotoxin ArMSGL-0141 (77 aa).

The signal sequence occupies residues 1–18; sequence MSGLGILVLTLLLLVYMA. A propeptide spanning residues 19 to 44 is cleaved from the precursor; the sequence is TSHQDAGEKQATQRDAINVRRRRSLT. 3 disulfides stabilise this stretch: cysteine 51/cysteine 63, cysteine 55/cysteine 71, and cysteine 62/cysteine 75. Phenylalanine 76 is subject to Phenylalanine amide.

This sequence belongs to the conotoxin O3 superfamily. As to expression, expressed by the venom duct.

It is found in the secreted. The chain is Conotoxin ArMSGL-0141 from Conus arenatus (Sand-dusted cone).